A 415-amino-acid chain; its full sequence is Extracellular signal-regulated kinase 1 (415 aa).

Positions 66-369 (YQILEIVGEG…VEDALKHPYL (304 aa)) constitute a Protein kinase domain. ATP-binding positions include 72–80 (VGEGAYGIV) and lysine 95. Catalysis depends on aspartate 190, which acts as the Proton acceptor. The residue at position 226 (threonine 226) is a Phosphothreonine. The short motif at 226–228 (TEY) is the TXY element. Phosphotyrosine is present on tyrosine 228.

The protein belongs to the protein kinase superfamily. CMGC Ser/Thr protein kinase family. MAP kinase subfamily. Mg(2+) serves as cofactor. Dually phosphorylated on Thr-226 and Tyr-228, which activates the enzyme.

The enzyme catalyses L-seryl-[protein] + ATP = O-phospho-L-seryl-[protein] + ADP + H(+). The catalysed reaction is L-threonyl-[protein] + ATP = O-phospho-L-threonyl-[protein] + ADP + H(+). Its activity is regulated as follows. Activated by tyrosine and threonine phosphorylation. The polypeptide is Extracellular signal-regulated kinase 1 (CEK1) (Candida albicans (strain WO-1) (Yeast)).